A 419-amino-acid polypeptide reads, in one-letter code: Creatine kinase S-type, mitochondrial (419 aa).

The transit peptide at 1-39 directs the protein to the mitochondrion; that stretch reads MASTFSKLLTGRNASLLFATLGTSALTTGYLVNRQKVCA. The interval 40-64 is cardiolipin-binding; it reads EARDQHKLFPPSADYPDLRKHNNCM. In terms of domain architecture, Phosphagen kinase N-terminal spans 46-132; sequence KLFPPSADYP…FDPVIKLRHN (87 aa). Residues 159–401 enclose the Phosphagen kinase C-terminal domain; that stretch reads YVLSSRVRTG…NYLVDCEKKL (243 aa). ATP is bound by residues 162 to 166 and His-225; that span reads SSRVR. Position 255 is a phosphotyrosine (Tyr-255). ATP contacts are provided by residues Arg-270, Arg-326, 354 to 359, and Asp-369; that span reads RGTGGV. A Phosphothreonine modification is found at Thr-356.

Belongs to the ATP:guanido phosphotransferase family. In terms of assembly, exists as an octamer composed of four CKMT2 homodimers.

It is found in the mitochondrion inner membrane. The enzyme catalyses creatine + ATP = N-phosphocreatine + ADP + H(+). Its function is as follows. Reversibly catalyzes the transfer of phosphate between ATP and various phosphogens (e.g. creatine phosphate). Creatine kinase isoenzymes play a central role in energy transduction in tissues with large, fluctuating energy demands, such as skeletal muscle, heart, brain and spermatozoa. The protein is Creatine kinase S-type, mitochondrial (CKMT2) of Oryctolagus cuniculus (Rabbit).